The primary structure comprises 200 residues: Holliday junction branch migration complex subunit RuvA (200 aa).

The domain I stretch occupies residues Met-1–Ser-65. The domain II stretch occupies residues Ser-66–Pro-144. The flexible linker stretch occupies residues Val-145 to Ser-149. Residues Thr-150–Ser-200 are domain III.

This sequence belongs to the RuvA family. In terms of assembly, homotetramer. Forms an RuvA(8)-RuvB(12)-Holliday junction (HJ) complex. HJ DNA is sandwiched between 2 RuvA tetramers; dsDNA enters through RuvA and exits via RuvB. An RuvB hexamer assembles on each DNA strand where it exits the tetramer. Each RuvB hexamer is contacted by two RuvA subunits (via domain III) on 2 adjacent RuvB subunits; this complex drives branch migration. In the full resolvosome a probable DNA-RuvA(4)-RuvB(12)-RuvC(2) complex forms which resolves the HJ.

It localises to the cytoplasm. Its function is as follows. The RuvA-RuvB-RuvC complex processes Holliday junction (HJ) DNA during genetic recombination and DNA repair, while the RuvA-RuvB complex plays an important role in the rescue of blocked DNA replication forks via replication fork reversal (RFR). RuvA specifically binds to HJ cruciform DNA, conferring on it an open structure. The RuvB hexamer acts as an ATP-dependent pump, pulling dsDNA into and through the RuvAB complex. HJ branch migration allows RuvC to scan DNA until it finds its consensus sequence, where it cleaves and resolves the cruciform DNA. The chain is Holliday junction branch migration complex subunit RuvA from Chlamydia trachomatis serovar A (strain ATCC VR-571B / DSM 19440 / HAR-13).